A 483-amino-acid chain; its full sequence is Acetyl-coenzyme A carboxylase carboxyl transferase subunit beta, chloroplastic (483 aa).

In terms of domain architecture, CoA carboxyltransferase N-terminal spans 219–483 (LWVQCENCYG…LHTFFPLNQN (265 aa)). Residues Cys223, Cys226, Cys242, and Cys245 each contribute to the Zn(2+) site. Residues 223 to 245 (CENCYGLNYKKFFKSKMNLCEQC) form a C4-type zinc finger.

It belongs to the AccD/PCCB family. In terms of assembly, acetyl-CoA carboxylase is a heterohexamer composed of biotin carboxyl carrier protein, biotin carboxylase and 2 subunits each of ACCase subunit alpha and ACCase plastid-coded subunit beta (accD). The cofactor is Zn(2+).

The protein localises to the plastid. It localises to the chloroplast stroma. It catalyses the reaction N(6)-carboxybiotinyl-L-lysyl-[protein] + acetyl-CoA = N(6)-biotinyl-L-lysyl-[protein] + malonyl-CoA. It functions in the pathway lipid metabolism; malonyl-CoA biosynthesis; malonyl-CoA from acetyl-CoA: step 1/1. Functionally, component of the acetyl coenzyme A carboxylase (ACC) complex. Biotin carboxylase (BC) catalyzes the carboxylation of biotin on its carrier protein (BCCP) and then the CO(2) group is transferred by the transcarboxylase to acetyl-CoA to form malonyl-CoA. The polypeptide is Acetyl-coenzyme A carboxylase carboxyl transferase subunit beta, chloroplastic (Guizotia abyssinica (Niger)).